We begin with the raw amino-acid sequence, 407 residues long: Arginine biosynthesis bifunctional protein ArgJ (407 aa).

6 residues coordinate substrate: Thr169, Lys192, Thr203, Glu283, Asn402, and Ser407. Thr203 functions as the Nucleophile in the catalytic mechanism.

This sequence belongs to the ArgJ family. In terms of assembly, heterotetramer of two alpha and two beta chains.

The protein resides in the cytoplasm. The catalysed reaction is N(2)-acetyl-L-ornithine + L-glutamate = N-acetyl-L-glutamate + L-ornithine. It catalyses the reaction L-glutamate + acetyl-CoA = N-acetyl-L-glutamate + CoA + H(+). It participates in amino-acid biosynthesis; L-arginine biosynthesis; L-ornithine and N-acetyl-L-glutamate from L-glutamate and N(2)-acetyl-L-ornithine (cyclic): step 1/1. Its pathway is amino-acid biosynthesis; L-arginine biosynthesis; N(2)-acetyl-L-ornithine from L-glutamate: step 1/4. Catalyzes two activities which are involved in the cyclic version of arginine biosynthesis: the synthesis of N-acetylglutamate from glutamate and acetyl-CoA as the acetyl donor, and of ornithine by transacetylation between N(2)-acetylornithine and glutamate. The protein is Arginine biosynthesis bifunctional protein ArgJ of Mycobacterium leprae (strain TN).